The sequence spans 307 residues: Aspartate carbamoyltransferase catalytic subunit (307 aa).

Residues Arg-54 and Thr-55 each contribute to the carbamoyl phosphate site. Lys-83 serves as a coordination point for L-aspartate. Carbamoyl phosphate contacts are provided by Arg-104, His-132, and Gln-135. Arg-165 and Arg-228 together coordinate L-aspartate. Positions 267 and 268 each coordinate carbamoyl phosphate.

Belongs to the aspartate/ornithine carbamoyltransferase superfamily. ATCase family. Heterododecamer (2C3:3R2) of six catalytic PyrB chains organized as two trimers (C3), and six regulatory PyrI chains organized as three dimers (R2).

It carries out the reaction carbamoyl phosphate + L-aspartate = N-carbamoyl-L-aspartate + phosphate + H(+). The protein operates within pyrimidine metabolism; UMP biosynthesis via de novo pathway; (S)-dihydroorotate from bicarbonate: step 2/3. Functionally, catalyzes the condensation of carbamoyl phosphate and aspartate to form carbamoyl aspartate and inorganic phosphate, the committed step in the de novo pyrimidine nucleotide biosynthesis pathway. This Clostridium perfringens (strain 13 / Type A) protein is Aspartate carbamoyltransferase catalytic subunit.